Reading from the N-terminus, the 285-residue chain is MVKRSRATRLSPSIWSGWESPQCRSIRARLLLPRGRSRPPNADCCWNQLAVTPDTRMPASSAAGRDAAAYDAWYDSPTGRPILATEVAALRPLIEVFAQPRLEIGVGTGRFADLLGVRFGLDPSRDALMFARRRGVLVANAVGEAVPFVSRHFGAVLMAFTLCFVTDPAAIFRETRRLLADGGGLVIGFLPRGTPWADLYALRAARGQPGYRDARFYTAAELEQLLADSGFRVIARRCTLHQPPGLARYDIEAAHDGIQAGAGFVAISAVDQAHEPKDDHPLESE.

This sequence belongs to the methyltransferase superfamily.

This is an uncharacterized protein from Mycobacterium tuberculosis (strain CDC 1551 / Oshkosh).